Reading from the N-terminus, the 133-residue chain is Nodulation protein K (133 aa).

The sequence is that of Nodulation protein K (nodK) from Bradyrhizobium elkanii.